The primary structure comprises 377 residues: Guanine nucleotide-binding protein subunit beta (377 aa).

WD repeat units lie at residues 63-93, 105-135, 154-185, 202-233, 246-276, 293-323, and 339-369; these read GHTG…IVWN, LPCA…SIFN, GHKG…VLWD, GHTA…RLWD, GHES…RLFD, GDIP…YVWD, and SHEG…KIWA.

The protein belongs to the WD repeat G protein beta family. G proteins are composed of 3 units, alpha, beta and gamma.

Guanine nucleotide-binding proteins (G proteins) are involved as a modulator or transducer in various transmembrane signaling systems. The beta and gamma chains are required for the GTPase activity, for replacement of GDP by GTP, and for G protein-effector interaction. The protein is Guanine nucleotide-binding protein subunit beta (GB1) of Solanum tuberosum (Potato).